The sequence spans 471 residues: tRNA-2-methylthio-N(6)-dimethylallyladenosine synthase (471 aa).

Positions Lys29–Arg146 constitute an MTTase N-terminal domain. [4Fe-4S] cluster contacts are provided by Cys38, Cys74, Cys109, Cys187, Cys191, and Cys194. The Radical SAM core domain occupies Arg173 to Glu405. Residues Lys408 to Asp467 enclose the TRAM domain.

This sequence belongs to the methylthiotransferase family. MiaB subfamily. As to quaternary structure, monomer. [4Fe-4S] cluster is required as a cofactor.

Its subcellular location is the cytoplasm. The catalysed reaction is N(6)-dimethylallyladenosine(37) in tRNA + (sulfur carrier)-SH + AH2 + 2 S-adenosyl-L-methionine = 2-methylsulfanyl-N(6)-dimethylallyladenosine(37) in tRNA + (sulfur carrier)-H + 5'-deoxyadenosine + L-methionine + A + S-adenosyl-L-homocysteine + 2 H(+). Functionally, catalyzes the methylthiolation of N6-(dimethylallyl)adenosine (i(6)A), leading to the formation of 2-methylthio-N6-(dimethylallyl)adenosine (ms(2)i(6)A) at position 37 in tRNAs that read codons beginning with uridine. This Neorickettsia sennetsu (strain ATCC VR-367 / Miyayama) (Ehrlichia sennetsu) protein is tRNA-2-methylthio-N(6)-dimethylallyladenosine synthase.